A 340-amino-acid polypeptide reads, in one-letter code: Anthocyanidin reductase (340 aa).

K49 and Y169 together coordinate NADP(+).

This sequence belongs to the NAD(P)-dependent epimerase/dehydratase family. Dihydroflavonol-4-reductase subfamily. Homo- or heterodimer. As to expression, flowers and young siliques. Detected specifically in the endothelium of seed coat.

The enzyme catalyses a (2R,3R)-flavan-3-ol + 2 NAD(+) = an anthocyanidin with a 3-hydroxy group + 2 NADH + 2 H(+). It catalyses the reaction a (2R,3R)-flavan-3-ol + 2 NADP(+) = an anthocyanidin with a 3-hydroxy group + 2 NADPH + 2 H(+). It functions in the pathway secondary metabolite biosynthesis; flavonoid biosynthesis. With respect to regulation, inhibited by (+)-catechin, quercetin and (+)- and (-)-dihydroquercetin. Not inhibited by salt. Positive cooperativity with NADPH acting as cosubstrate and modulator. Its function is as follows. Involved in the biosynthesis of condensed tannins. Converts cyanidin into (-)-epicatechin as the major product. The polypeptide is Anthocyanidin reductase (BAN) (Arabidopsis thaliana (Mouse-ear cress)).